The chain runs to 524 residues: Phosphoenolpyruvate carboxykinase (ATP) (524 aa).

Residues R52, Y188, and K194 each coordinate substrate. Residues K194, H213, and 229–237 each bind ATP; that span reads GLSGTGKTT. Mn(2+)-binding residues include K194 and H213. D250 contributes to the Mn(2+) binding site. Residues E278, R314, and T439 each coordinate ATP. A substrate-binding site is contributed by R314.

The protein belongs to the phosphoenolpyruvate carboxykinase (ATP) family. Mn(2+) is required as a cofactor.

Its subcellular location is the cytoplasm. The catalysed reaction is oxaloacetate + ATP = phosphoenolpyruvate + ADP + CO2. The protein operates within carbohydrate biosynthesis; gluconeogenesis. In terms of biological role, involved in the gluconeogenesis. Catalyzes the conversion of oxaloacetate (OAA) to phosphoenolpyruvate (PEP) through direct phosphoryl transfer between the nucleoside triphosphate and OAA. In Campylobacter jejuni subsp. jejuni serotype O:2 (strain ATCC 700819 / NCTC 11168), this protein is Phosphoenolpyruvate carboxykinase (ATP).